Here is a 91-residue protein sequence, read N- to C-terminus: Small ribosomal subunit protein uS19 (91 aa).

This sequence belongs to the universal ribosomal protein uS19 family.

Functionally, protein S19 forms a complex with S13 that binds strongly to the 16S ribosomal RNA. This chain is Small ribosomal subunit protein uS19, found in Paraburkholderia phymatum (strain DSM 17167 / CIP 108236 / LMG 21445 / STM815) (Burkholderia phymatum).